Here is a 284-residue protein sequence, read N- to C-terminus: Peflin (284 aa).

The interval 1-111 is disordered; it reads MASYPYRQGC…QPGLYGQGGA (111 aa). Low complexity predominate over residues 8–26; sequence QGCPGAAGQAPGAPPGSYY. 9 tandem repeats follow at residues 21-29, 31-39, 41-49, 50-58, 59-67, 76-84, 85-92, 93-100, and 101-109. Positions 21–109 are 9 X 9 AA approximate tandem repeat of [AP]-P-G-G-P-Y-G-G-P-P; sequence PPGSYYPGPP…AQQPGLYGQG (89 aa). The segment covering 34–50 has biased composition (gly residues); the sequence is GQYGSGLPPGGGYGGPA. Low complexity predominate over residues 65 to 75; sequence GHPNPGMFPSG. Residues 76-90 show a composition bias toward gly residues; it reads TPGGPYGGAAPGGPY. EF-hand domains lie at 114-149, 155-183, 181-216, 217-253, and 254-283; these read NVDP…CNWS, TCLM…WKFI, KFIQ…MGYN, LSPQ…LQVL, and TEAF…ASRM. Ca(2+) contacts are provided by D127, D129, S131, and Y133. A Glycyl lysine isopeptide (Lys-Gly) (interchain with G-Cter in ubiquitin) cross-link involves residue K137. E138 serves as a coordination point for Ca(2+). Residues D194, D196, S198, S200, and E205 each coordinate Ca(2+). The tract at residues 204–284 is required for interaction with PDCD6; it reads TELQQALSQM…FVTMTASRML (81 aa).

Heterodimer; heterodimerizes (via the EF-hand 5) with PDCD6. Dissociates from PDCD6 in presence of calcium. Post-translationally, ubiquitinated by the BCR(KLHL12) E3 ubiquitin ligase complex.

It is found in the cytoplasm. The protein resides in the endoplasmic reticulum. It localises to the membrane. Its subcellular location is the cytoplasmic vesicle. The protein localises to the COPII-coated vesicle membrane. Its function is as follows. Calcium-binding protein that acts as an adapter that bridges unrelated proteins or stabilizes weak protein-protein complexes in response to calcium. Together with PDCD6, acts as a calcium-dependent adapter for the BCR(KLHL12) complex, a complex involved in endoplasmic reticulum (ER)-Golgi transport by regulating the size of COPII coats. In response to cytosolic calcium increase, the heterodimer formed with PDCD6 interacts with, and bridges together the BCR(KLHL12) complex and SEC31 (SEC31A or SEC31B), promoting monoubiquitination of SEC31 and subsequent collagen export, which is required for neural crest specification. Its role in the heterodimer formed with PDCD6 is however unclear: some evidence shows that PEF1 and PDCD6 work together and promote association between PDCD6 and SEC31 in presence of calcium. Other reports show that PEF1 dissociates from PDCD6 in presence of calcium, and may act as a negative regulator of PDCD6. Also acts as a negative regulator of ER-Golgi transport; possibly by inhibiting interaction between PDCD6 and SEC31. This is Peflin from Homo sapiens (Human).